We begin with the raw amino-acid sequence, 498 residues long: Beta-amylase 5 (498 aa).

Substrate contacts are provided by D56, H96, and D104. E189 (proton donor) is an active-site residue. Residues K298, H303, and T345 each contribute to the substrate site. E383 acts as the Proton acceptor in catalysis. Residues 384 to 385 (NA) and R423 each bind substrate.

The protein belongs to the glycosyl hydrolase 14 family. As to expression, detected in phloem sieve elements.

Its subcellular location is the cytoplasm. The catalysed reaction is Hydrolysis of (1-&gt;4)-alpha-D-glucosidic linkages in polysaccharides so as to remove successive maltose units from the non-reducing ends of the chains.. Beta-amylase activity. Major cytosolic beta-amylase isoform in rosette leaves and inflorescences stems. The protein is Beta-amylase 5 (BAM5) of Arabidopsis thaliana (Mouse-ear cress).